The chain runs to 931 residues: GPI ethanolamine phosphate transferase 1 (931 aa).

Residue Met1 is a topological domain, cytoplasmic. The helical transmembrane segment at 2–22 (LLFFALGLLIHFVFFASIFDI) threads the bilayer. Residues 23 to 442 (YFTSPLVHGM…SYYHTYDRLF (420 aa)) are Lumenal-facing. Asn128, Asn192, Asn295, and Asn350 each carry an N-linked (GlcNAc...) asparagine glycan. A helical membrane pass occupies residues 443-463 (LGINVAVGFVGWMSYTSLLII). Over 464–480 (KSHSNIPKGTRKEGKKP) the chain is Cytoplasmic. Residues 481-501 (HCLLLYSFIATGVLVACFLMI) form a helical membrane-spanning segment. Position 502 (Gln502) is a topological domain, lumenal. A helical transmembrane segment spans residues 503-523 (ACPWTYYVYCLLPVPIWYAVL). Residues 524–543 (REHEVIQDLVESLLTFPRSH) lie on the Cytoplasmic side of the membrane. The chain crosses the membrane as a helical span at residues 544 to 564 (FVAYLLVFTLGIEVLVLSFFY). Position 565 (Arg565) is a topological domain, lumenal. A helical membrane pass occupies residues 566–586 (YMLTAGLIVFAGWPFLTQLWT). Topologically, residues 587–591 (RAKIT) are cytoplasmic. The chain crosses the membrane as a helical span at residues 592–612 (FLSWAFFSLLLAVFPLMPVVG). At 613–618 (RKPNLS) the chain is on the lumenal side. The N-linked (GlcNAc...) asparagine glycan is linked to Asn616. The chain crosses the membrane as a helical span at residues 619-639 (LVMGAGFLVLLLSLAVVTTLG). Over 640–649 (KRNIKLVKGE) the chain is Cytoplasmic. A helical transmembrane segment spans residues 650–670 (LLVLLLQMLSTVLSMYVVYST). Residues 671–685 (HHSLLKKEGLPLMNQ) are Lumenal-facing. Residues 686 to 706 (IVSWATLASSLVAPLLSSTAL) form a helical membrane-spanning segment. Over 707–723 (SQRLASILLSLMSTYLL) the chain is Cytoplasmic. The chain crosses the membrane as a helical span at residues 724–744 (LSTGYEALFPLVLSCLMFVWI). At 745–786 (QVEQETLQQPGVSCKQKLTSIQFTCDTDIAQFRQLCPDDIRR) the chain is on the lumenal side. The helical transmembrane segment at 787 to 807 (AFFLVFFLLTAFFGTGNIASI) threads the bilayer. Topologically, residues 808 to 824 (NSFDLASVYCFLTVFSP) are cytoplasmic. A helical membrane pass occupies residues 825–845 (FMMGALMMWKILIPFVLVMCA). The Lumenal portion of the chain corresponds to 846–858 (FEAVQITTQLSSK). A helical transmembrane segment spans residues 859–879 (GLFLVVLIISDIMALHFFFLV). Topologically, residues 880–894 (KDSGSWLDIGTSISH) are cytoplasmic. The helical transmembrane segment at 895 to 915 (YVIVMSMTIFLVFLNGLAQLL) threads the bilayer. The Lumenal portion of the chain corresponds to 916–931 (TTKKLQLCGKPKSHLM).

It belongs to the PIGG/PIGN/PIGO family. PIGN subfamily.

Its subcellular location is the endoplasmic reticulum membrane. It functions in the pathway glycolipid biosynthesis; glycosylphosphatidylinositol-anchor biosynthesis. Functionally, ethanolamine phosphate transferase that catalyzes an ethanolamine phosphate (EtNP) transfer from phosphatidylethanolamine (PE) to the 2-OH position of the first alpha-1,4-linked mannose of the alpha-D-Man-(1-&gt;6)-alpha-D-Man-(1-&gt;4)-alpha-D-GlcN-(1-&gt;6)-(1-radyl,2-acyl-sn-glycero-3-phospho)-2-acyl-inositol (also termed H3) intermediate to generate an alpha-D-Man-(1-&gt;6)-2-PEtn-alpha-D-Man-(1-&gt;4)-alpha-D-GlcN-(1-&gt;6)-(1-radyl,2-acyl-sn-glycero-3-phospho)-2-acyl-inositol and participates in the eighth step of the glycosylphosphatidylinositol-anchor biosynthesis. May act as suppressor of replication stress and chromosome missegregation. This is GPI ethanolamine phosphate transferase 1 from Mus musculus (Mouse).